We begin with the raw amino-acid sequence, 172 residues long: Myosin regulatory light polypeptide 9 (172 aa).

Basic residues predominate over residues 1-16 (MSSKRAKTKTTKKRPQ). The segment at 1-20 (MSSKRAKTKTTKKRPQRATS) is disordered. An N-acetylserine modification is found at S2. A Phosphothreonine; by MLCK, CIT and ROCK2 modification is found at T19. S20 is modified (phosphoserine; by CDC42BP, CIT, MLCK, PAK1, ROCK1, ROCK2, DAPK1, DAPK2 and ZIPK/DAPK3). EF-hand domains lie at 29–64 (SQIQ…LGKN), 98–133 (DPED…MGDR), and 134–169 (FTDE…GAKD). Ca(2+)-binding residues include D42, N44, D46, and D53.

Myosin is a hexamer of 2 heavy chains and 4 light chains: interacts with myosin heavy chain MYO19. Interacts with LUZP1; the interaction results in inhibition of phosphorylation of MYL9 by DAPK3. Phosphorylation increases the actin-activated myosin ATPase activity and thereby regulates the contractile activity. It is required to generate the driving force in the migration of the cells but not necessary for localization of myosin-2 at the leading edge. Phosphorylation is required for myotube formation. Phosphorylated by DAPK3; DAPK3-mediated phosphorylation is inhibited by LUZP1.

It localises to the cytoplasm. It is found in the cytoskeleton. Its subcellular location is the cell cortex. Myosin regulatory subunit that plays an important role in regulation of both smooth muscle and nonmuscle cell contractile activity via its phosphorylation. Implicated in cytokinesis, receptor capping, and cell locomotion. In myoblasts, may regulate PIEZO1-dependent cortical actomyosin assembly involved in myotube formation. This is Myosin regulatory light polypeptide 9 (MYL9) from Bos taurus (Bovine).